The chain runs to 80 residues: Large ribosomal subunit protein bL31B (80 aa).

The protein belongs to the bacterial ribosomal protein bL31 family. Type B subfamily. Part of the 50S ribosomal subunit.

In Streptococcus thermophilus (strain CNRZ 1066), this protein is Large ribosomal subunit protein bL31B.